The primary structure comprises 901 residues: Protein translocase subunit SecA (901 aa).

ATP contacts are provided by residues glutamine 87, 105–109 (GEGKT), and aspartate 512. The Zn(2+) site is built by cysteine 885, cysteine 887, cysteine 896, and histidine 897.

The protein belongs to the SecA family. As to quaternary structure, monomer and homodimer. Part of the essential Sec protein translocation apparatus which comprises SecA, SecYEG and auxiliary proteins SecDF-YajC and YidC. Zn(2+) is required as a cofactor.

It is found in the cell inner membrane. The protein resides in the cytoplasm. It carries out the reaction ATP + H2O + cellular proteinSide 1 = ADP + phosphate + cellular proteinSide 2.. Functionally, part of the Sec protein translocase complex. Interacts with the SecYEG preprotein conducting channel. Has a central role in coupling the hydrolysis of ATP to the transfer of proteins into and across the cell membrane, serving both as a receptor for the preprotein-SecB complex and as an ATP-driven molecular motor driving the stepwise translocation of polypeptide chains across the membrane. The chain is Protein translocase subunit SecA from Salmonella paratyphi B (strain ATCC BAA-1250 / SPB7).